Here is a 214-residue protein sequence, read N- to C-terminus: Protein GrpE (214 aa).

The segment covering 1-13 has biased composition (polar residues); the sequence is MKHTSEPTSQPDT. The interval 1-61 is disordered; that stretch reads MKHTSEPTSQ…AAVAEATIEP (61 aa). A compositionally biased stretch (low complexity) spans 14–57; sequence QAAESAQSSAAAAGQAASAYSSQAQRASADAQAIAGDEAAVAEA.

It belongs to the GrpE family. As to quaternary structure, homodimer.

It is found in the cytoplasm. In terms of biological role, participates actively in the response to hyperosmotic and heat shock by preventing the aggregation of stress-denatured proteins, in association with DnaK and GrpE. It is the nucleotide exchange factor for DnaK and may function as a thermosensor. Unfolded proteins bind initially to DnaJ; upon interaction with the DnaJ-bound protein, DnaK hydrolyzes its bound ATP, resulting in the formation of a stable complex. GrpE releases ADP from DnaK; ATP binding to DnaK triggers the release of the substrate protein, thus completing the reaction cycle. Several rounds of ATP-dependent interactions between DnaJ, DnaK and GrpE are required for fully efficient folding. In Ralstonia nicotianae (strain ATCC BAA-1114 / GMI1000) (Ralstonia solanacearum), this protein is Protein GrpE.